The following is a 149-amino-acid chain: Epoxide hydrolase EphG (149 aa).

The active-site Proton donor is Asp-93. Asp-122 functions as the Proton acceptor in the catalytic mechanism.

The protein belongs to the limonene-1,2-epoxide hydrolase family. In terms of assembly, homodimer. Is also present as monomer in solution.

It catalyses the reaction an epoxide + H2O = an ethanediol. It carries out the reaction 5,6alpha-epoxy-5alpha-cholestan-3beta-ol + H2O = 5alpha-cholestane-3beta,5,6beta-triol. The enzyme catalyses 5,6beta-epoxy-5beta-cholestan-3beta-ol + H2O = 5alpha-cholestane-3beta,5,6beta-triol. With respect to regulation, is inhibited by the anti-epileptic drug valpromide (Ki value of about 100 uM). Functionally, epoxide hydrolase capable of hydrolyzing long or bulky lipophilic epoxides such as 9,10-epoxystearic acid and cholesterol 5,6-oxide in vitro. The physiological substrates have yet to be identified, but could be fatty acid or steroid derivatives. This is Epoxide hydrolase EphG (ephG) from Mycobacterium tuberculosis (strain ATCC 25618 / H37Rv).